A 455-amino-acid polypeptide reads, in one-letter code: tRNA-2-methylthio-N(6)-dimethylallyladenosine synthase (455 aa).

One can recognise an MTTase N-terminal domain in the interval 18–133 (KKLFIETYGC…LPELIAAVEA (116 aa)). [4Fe-4S] cluster-binding residues include Cys27, Cys63, Cys97, Cys171, Cys175, and Cys178. The 234-residue stretch at 157 to 390 (CGNHISGFVS…IALQNRLSAE (234 aa)) folds into the Radical SAM core domain. In terms of domain architecture, TRAM spans 393-455 (QRCIGKTYEV…SSATLKGEEV (63 aa)).

This sequence belongs to the methylthiotransferase family. MiaB subfamily. In terms of assembly, monomer. Requires [4Fe-4S] cluster as cofactor.

The protein localises to the cytoplasm. The catalysed reaction is N(6)-dimethylallyladenosine(37) in tRNA + (sulfur carrier)-SH + AH2 + 2 S-adenosyl-L-methionine = 2-methylsulfanyl-N(6)-dimethylallyladenosine(37) in tRNA + (sulfur carrier)-H + 5'-deoxyadenosine + L-methionine + A + S-adenosyl-L-homocysteine + 2 H(+). Functionally, catalyzes the methylthiolation of N6-(dimethylallyl)adenosine (i(6)A), leading to the formation of 2-methylthio-N6-(dimethylallyl)adenosine (ms(2)i(6)A) at position 37 in tRNAs that read codons beginning with uridine. This Bacteroides thetaiotaomicron (strain ATCC 29148 / DSM 2079 / JCM 5827 / CCUG 10774 / NCTC 10582 / VPI-5482 / E50) protein is tRNA-2-methylthio-N(6)-dimethylallyladenosine synthase.